A 155-amino-acid polypeptide reads, in one-letter code: MNFISDQVKKLSSSTPEEPDHNKPVEGTETATRPATNAELMASAKVVAEAAQAAARNESDKLDKGKVAGASADILDAAEKYGKFDEKSSTGQYLDKAEKYLNDYESSHSTGAGGPPPPTSQAEPASQPEPAAKKDDEESGGGLGGYAKMAQGFLK.

Methionine 1 is subject to N-acetylmethionine. Disordered stretches follow at residues 1-37 (MNFI…PATN) and 85-155 (DEKS…GFLK). A compositionally biased stretch (basic and acidic residues) spans 95–106 (DKAEKYLNDYES). Over residues 120–130 (SQAEPASQPEP) the composition is skewed to low complexity.

As to quaternary structure, interacts with DEK3.

Functionally, may be a negative regulator of the ABA signaling/synthesis pathway. This is Nodulin-related protein 2 from Arabidopsis thaliana (Mouse-ear cress).